The primary structure comprises 708 residues: O-antigen chain terminator bifunctional methyltransferase/kinase WbdD (708 aa).

The methyltransferase stretch occupies residues Met-1–Asn-210. Residues Tyr-16–Gln-17, Arg-36, Gly-61, Asp-82–Asn-87, Gly-108–Glu-111, and Leu-128 each bind S-adenosyl-L-methionine. Residues His-211–Arg-459 form a kinase region. ATP-binding positions include Pro-229, His-237, Arg-241–Tyr-243, Lys-252, Glu-274, Glu-309–Leu-311, Met-358, and Asp-369. Residues Ala-485–Ser-594 are a coiled coil. The required for membrane-binding stretch occupies residues Tyr-601 to Pro-669. Residues Val-687–Lys-708 are required for localizing WbdA to the membrane.

This sequence belongs to the WbdD family. As to quaternary structure, interacts with WbdA.

Its subcellular location is the cell inner membrane. The catalysed reaction is 3-O-phospho-alpha-D-Man-(1-&gt;2)-alpha-D-Man-(1-&gt;2)-[alpha-D-Man-(1-&gt;3)-alpha-D-Man-(1-&gt;3)-alpha-D-Man-(1-&gt;2)-alpha-D-Man-(1-&gt;2)](n)-alpha-D-Man-(1-&gt;3)-alpha-D-Man-(1-&gt;3)-alpha-D-Man-(1-&gt;3)-alpha-D-GlcNAc-di-trans,octa-cis-undecaprenyl diphosphate + S-adenosyl-L-methionine = 3-O-methylphospho-alpha-D-Man-(1-&gt;2)-alpha-D-Man-(1-&gt;2)-[alpha-D-Man-(1-&gt;3)-alpha-D-Man-(1-&gt;3)-alpha-D-Man-(1-&gt;2)-alpha-D-Man-(1-&gt;2)](n)-alpha-D-Man-(1-&gt;3)-alpha-D-Man-(1-&gt;3)-alpha-D-Man-(1-&gt;3)-alpha-D-GlcNAc-di-trans,octa-cis-undecaprenyl diphosphate + S-adenosyl-L-homocysteine. It carries out the reaction alpha-D-Man-(1-&gt;2)-alpha-D-Man-(1-&gt;2)-[alpha-D-Man-(1-&gt;3)-alpha-D-Man-(1-&gt;3)-alpha-D-Man-(1-&gt;2)-alpha-D-Man-(1-&gt;2)](n)-alpha-D-Man-(1-&gt;3)-alpha-D-Man-(1-&gt;3)-alpha-D-Man-(1-&gt;3)-alpha-D-GlcNAc-di-trans,octa-cis-undecaprenyl diphosphate + ATP = 3-O-phospho-alpha-D-Man-(1-&gt;2)-alpha-D-Man-(1-&gt;2)-[alpha-D-Man-(1-&gt;3)-alpha-D-Man-(1-&gt;3)-alpha-D-Man-(1-&gt;2)-alpha-D-Man-(1-&gt;2)](n)-alpha-D-Man-(1-&gt;3)-alpha-D-Man-(1-&gt;3)-alpha-D-Man-(1-&gt;3)-alpha-D-GlcNAc-di-trans,octa-cis-undecaprenyl diphosphate + ADP + H(+). It participates in bacterial outer membrane biogenesis; LPS O-antigen biosynthesis. Functionally, regulates the length of the LPS O-antigen polysaccharide chain. Stops the polymerization of the chain by phosphorylating and then methylating the phosphate on the terminal sugar. This terminal modification is essential for export of the O-antigen across the inner membrane. WbdD is also required for correct localization of the WbdA mannosyltransferase. This chain is O-antigen chain terminator bifunctional methyltransferase/kinase WbdD, found in Escherichia coli.